The following is a 576-amino-acid chain: Protein alan shepard (576 aa).

Residues 1 to 12 (MHPRYSPAPPPQ) show a composition bias toward pro residues. The segment at 1–66 (MHPRYSPAPP…GSSSSAAAAP (66 aa)) is disordered. Position 5 is a phosphotyrosine (Y5). Over residues 13–24 (QQQQMGGPPHQQ) the composition is skewed to low complexity. Positions 25 to 35 (QGGGGGGGGNM) are enriched in gly residues. Over residues 37-54 (GPSNAQQLPPQIPRSQNY) the composition is skewed to polar residues. Low complexity predominate over residues 55-66 (SNGSSSSAAAAP). 2 positions are modified to phosphotyrosine: Y125 and Y142. Residues 164-225 (PATTTYGQRV…TVQNQNQQGG (62 aa)) are disordered. The span at 178–225 (SPSNTNSSSSSNTGSQSGTLSTSLSNTTNTNTNMGPNGTVQNQNQQGG) shows a compositional bias: low complexity. 2 consecutive RRM domains span residues 231 to 302 (TNLY…MAKQ) and 308 to 387 (TNLY…FADG). A disordered region spans residues 538-576 (YAPPPTIIPTMPMTDSEQASTAASPDEAYTQYPHQAAPK).

Functionally, has a role in the perception of gravity. The sequence is that of Protein alan shepard from Drosophila simulans (Fruit fly).